The sequence spans 435 residues: Serine hydroxymethyltransferase (435 aa).

(6S)-5,6,7,8-tetrahydrofolate-binding positions include Leu-133 and 137-139; that span reads GHL. Lys-242 is subject to N6-(pyridoxal phosphate)lysine.

It belongs to the SHMT family. Homodimer. Pyridoxal 5'-phosphate is required as a cofactor.

The protein resides in the cytoplasm. It carries out the reaction (6R)-5,10-methylene-5,6,7,8-tetrahydrofolate + glycine + H2O = (6S)-5,6,7,8-tetrahydrofolate + L-serine. The protein operates within one-carbon metabolism; tetrahydrofolate interconversion. It functions in the pathway amino-acid biosynthesis; glycine biosynthesis; glycine from L-serine: step 1/1. Its function is as follows. Catalyzes the reversible interconversion of serine and glycine with tetrahydrofolate (THF) serving as the one-carbon carrier. This reaction serves as the major source of one-carbon groups required for the biosynthesis of purines, thymidylate, methionine, and other important biomolecules. Also exhibits THF-independent aldolase activity toward beta-hydroxyamino acids, producing glycine and aldehydes, via a retro-aldol mechanism. In Sphingopyxis alaskensis (strain DSM 13593 / LMG 18877 / RB2256) (Sphingomonas alaskensis), this protein is Serine hydroxymethyltransferase.